A 319-amino-acid chain; its full sequence is ATP-dependent 6-phosphofructokinase (319 aa).

G11 serves as a coordination point for ATP. Residues R21–R25 and D59 contribute to the ADP site. Residues R72–C73 and G102–S105 contribute to the ATP site. A Mg(2+)-binding site is contributed by D103. T125–D127 contributes to the substrate binding site. Catalysis depends on D127, which acts as the Proton acceptor. Residue R154 coordinates ADP. Residues R162 and M169–R171 contribute to the substrate site. ADP is bound by residues G185–E187, R211, and K213–H215. Substrate contacts are provided by residues E222, R243, and H249–R252.

This sequence belongs to the phosphofructokinase type A (PFKA) family. ATP-dependent PFK group I subfamily. Prokaryotic clade 'B1' sub-subfamily. As to quaternary structure, homotetramer. Mg(2+) serves as cofactor.

Its subcellular location is the cytoplasm. It catalyses the reaction beta-D-fructose 6-phosphate + ATP = beta-D-fructose 1,6-bisphosphate + ADP + H(+). Its pathway is carbohydrate degradation; glycolysis; D-glyceraldehyde 3-phosphate and glycerone phosphate from D-glucose: step 3/4. With respect to regulation, allosterically activated by ADP and other diphosphonucleosides, and allosterically inhibited by phosphoenolpyruvate. Functionally, catalyzes the phosphorylation of D-fructose 6-phosphate to fructose 1,6-bisphosphate by ATP, the first committing step of glycolysis. This Geobacillus stearothermophilus (Bacillus stearothermophilus) protein is ATP-dependent 6-phosphofructokinase.